We begin with the raw amino-acid sequence, 204 residues long: Linker for activation of T-cells family member 2 (204 aa).

The Extracellular portion of the chain corresponds to 1–7; that stretch reads MNAELEL. The helical; Signal-anchor for type III membrane protein transmembrane segment at 8–28 threads the bilayer; sequence LWPLSGLLLLLLLGTTAWLCV. Residues cysteine 27 and cysteine 30 are each lipidated (S-palmitoyl cysteine). The Cytoplasmic portion of the chain corresponds to 29-204; the sequence is QCSRPGVKRN…NGDVATTEKI (176 aa). Residue tyrosine 60 is modified to Phosphotyrosine. Residues serine 61 and serine 96 each carry the phosphoserine modification. A phosphotyrosine mark is found at tyrosine 140, tyrosine 161, and tyrosine 193. Residues 147-204 are disordered; sequence KPSTPESGTEESEDYQNSVSILQWRESKRTMGARTSPSGSPDEEPDYVNGDVATTEKI.

As to quaternary structure, when phosphorylated, interacts with GRB2. May also interact with SOS1, GAB1 and CBL. Post-translationally, phosphorylated on tyrosines following cross-linking of BCR in B-cells, high affinity IgG receptor (FCGR1) in myeloid cells, or high affinity IgE receptor (FCER1) in mast cells; which induces the recruitment of GRB2.

The protein localises to the cell membrane. In terms of biological role, involved in FCER1 (high affinity immunoglobulin epsilon receptor)-mediated signaling in mast cells. May also be involved in BCR (B-cell antigen receptor)-mediated signaling in B-cells and FCGR1 (high affinity immunoglobulin gamma Fc receptor I)-mediated signaling in myeloid cells. Couples activation of these receptors and their associated kinases with distal intracellular events through the recruitment of GRB2. The sequence is that of Linker for activation of T-cells family member 2 (Lat2) from Rattus norvegicus (Rat).